The sequence spans 916 residues: Oxoglutarate dehydrogenase (916 aa).

Belongs to the alpha-ketoglutarate dehydrogenase family. Homodimer. Part of the 2-oxoglutarate dehydrogenase (OGDH) complex composed of E1 (2-oxoglutarate dehydrogenase), E2 (dihydrolipoamide succinyltransferase) and E3 (dihydrolipoamide dehydrogenase); the complex contains multiple copies of the three enzymatic components (E1, E2 and E3). Thiamine diphosphate serves as cofactor.

It carries out the reaction N(6)-[(R)-lipoyl]-L-lysyl-[protein] + 2-oxoglutarate + H(+) = N(6)-[(R)-S(8)-succinyldihydrolipoyl]-L-lysyl-[protein] + CO2. Functionally, E1 component of the 2-oxoglutarate dehydrogenase (OGDH) complex which catalyzes the decarboxylation of 2-oxoglutarate, the first step in the conversion of 2-oxoglutarate to succinyl-CoA and CO(2). The sequence is that of Oxoglutarate dehydrogenase (sucA) from Buchnera aphidicola subsp. Baizongia pistaciae (strain Bp).